The sequence spans 473 residues: Siroheme synthase (473 aa).

A precorrin-2 dehydrogenase /sirohydrochlorin ferrochelatase region spans residues methionine 1–leucine 203. NAD(+)-binding positions include alanine 22 to valine 23 and proline 43 to arginine 44. Position 128 is a phosphoserine (serine 128). The uroporphyrinogen-III C-methyltransferase stretch occupies residues glycine 216–alanine 473. Proline 225 is a binding site for S-adenosyl-L-methionine. The active-site Proton acceptor is aspartate 248. The active-site Proton donor is lysine 270. S-adenosyl-L-methionine contacts are provided by residues glycine 302–aspartate 304, isoleucine 307, threonine 332–alanine 333, methionine 384, and glycine 413.

The protein in the N-terminal section; belongs to the precorrin-2 dehydrogenase / sirohydrochlorin ferrochelatase family. It in the C-terminal section; belongs to the precorrin methyltransferase family.

The catalysed reaction is uroporphyrinogen III + 2 S-adenosyl-L-methionine = precorrin-2 + 2 S-adenosyl-L-homocysteine + H(+). It carries out the reaction precorrin-2 + NAD(+) = sirohydrochlorin + NADH + 2 H(+). It catalyses the reaction siroheme + 2 H(+) = sirohydrochlorin + Fe(2+). Its pathway is cofactor biosynthesis; adenosylcobalamin biosynthesis; precorrin-2 from uroporphyrinogen III: step 1/1. It functions in the pathway cofactor biosynthesis; adenosylcobalamin biosynthesis; sirohydrochlorin from precorrin-2: step 1/1. The protein operates within porphyrin-containing compound metabolism; siroheme biosynthesis; precorrin-2 from uroporphyrinogen III: step 1/1. It participates in porphyrin-containing compound metabolism; siroheme biosynthesis; siroheme from sirohydrochlorin: step 1/1. Its pathway is porphyrin-containing compound metabolism; siroheme biosynthesis; sirohydrochlorin from precorrin-2: step 1/1. Its function is as follows. Multifunctional enzyme that catalyzes the SAM-dependent methylations of uroporphyrinogen III at position C-2 and C-7 to form precorrin-2 via precorrin-1. Then it catalyzes the NAD-dependent ring dehydrogenation of precorrin-2 to yield sirohydrochlorin. Finally, it catalyzes the ferrochelation of sirohydrochlorin to yield siroheme. This is Siroheme synthase from Bordetella pertussis (strain Tohama I / ATCC BAA-589 / NCTC 13251).